The chain runs to 214 residues: Adenylate kinase (214 aa).

10 to 15 (GAGKGT) is a binding site for ATP. Positions 30 to 59 (CTGDMLRAAVKAGSELGLKAKEIMDAGKLV) are NMP. AMP-binding positions include T31, R36, 57–59 (KLV), 85–88 (GFPR), and Q92. The interval 122–159 (GRRVHAASGRVYHIKFNPPKVEDKDDVTGEELTIRKDD) is LID. ATP is bound by residues R123 and 132-133 (VY). Positions 156 and 167 each coordinate AMP. Position 200 (R200) interacts with ATP.

This sequence belongs to the adenylate kinase family. Monomer.

The protein localises to the cytoplasm. It catalyses the reaction AMP + ATP = 2 ADP. It functions in the pathway purine metabolism; AMP biosynthesis via salvage pathway; AMP from ADP: step 1/1. In terms of biological role, catalyzes the reversible transfer of the terminal phosphate group between ATP and AMP. Plays an important role in cellular energy homeostasis and in adenine nucleotide metabolism. The polypeptide is Adenylate kinase (Yersinia enterocolitica).